Consider the following 201-residue polypeptide: Large ribosomal subunit protein bL25 (201 aa).

Belongs to the bacterial ribosomal protein bL25 family. CTC subfamily. As to quaternary structure, part of the 50S ribosomal subunit; part of the 5S rRNA/L5/L18/L25 subcomplex. Contacts the 5S rRNA. Binds to the 5S rRNA independently of L5 and L18.

Its function is as follows. This is one of the proteins that binds to the 5S RNA in the ribosome where it forms part of the central protuberance. The polypeptide is Large ribosomal subunit protein bL25 (Burkholderia vietnamiensis (strain G4 / LMG 22486) (Burkholderia cepacia (strain R1808))).